A 432-amino-acid polypeptide reads, in one-letter code: MSKIVKVIGREIIDSRGNPTVEAEVHLEGGFVGMAAAPSGASTGSREALELRDGDKSRFLGKGVTKAVGAVNGPIAQAILGKDAKDQAGIDKIMIDLDGTENKSNFGANAILAVSLANAKAAAAAKGMPLYEHIAELNGTPGKYSMPVPMMNIINGGEHADNNVDIQEFMIQPVGAKTVKEAIRMGSEVFHHLAKVLKGKGMNTAVGDEGGYAPNLGSNAEALAVIAEAVKAAGYELGKDITLAMDCAASEFYKDGKYVLAGEGNKAFTSEEFTHFLEELTKQYPIVSIEDGLDESDWDGFAYQTKVLGDKIQLVGDDLFVTNTKILKEGIEKGIANSILIKFNQIGSLTETLAAIKMAKDAGYTAVISHRSGETEDATIADLAVGTAAGQIKTGSMSRSDRVAKYNQLIRIEEALGEKAPYNGRKEIKGQA.

Glutamine 167 contributes to the (2R)-2-phosphoglycerate binding site. The Proton donor role is filled by glutamate 209. Aspartate 246, glutamate 290, and aspartate 317 together coordinate Mg(2+). Residues lysine 342, arginine 371, serine 372, and lysine 393 each contribute to the (2R)-2-phosphoglycerate site. Lysine 342 (proton acceptor) is an active-site residue.

Belongs to the enolase family. As to quaternary structure, component of the RNA degradosome, a multiprotein complex involved in RNA processing and mRNA degradation. Mg(2+) serves as cofactor.

Its subcellular location is the cytoplasm. It localises to the secreted. It is found in the cell surface. The catalysed reaction is (2R)-2-phosphoglycerate = phosphoenolpyruvate + H2O. It functions in the pathway carbohydrate degradation; glycolysis; pyruvate from D-glyceraldehyde 3-phosphate: step 4/5. Its function is as follows. Catalyzes the reversible conversion of 2-phosphoglycerate (2-PG) into phosphoenolpyruvate (PEP). It is essential for the degradation of carbohydrates via glycolysis. In Salmonella agona (strain SL483), this protein is Enolase.